We begin with the raw amino-acid sequence, 1061 residues long: Transcription termination factor 2 (1061 aa).

2 disordered regions span residues 1–163 and 212–253; these read MSSE…TAEA and ILSS…VKTS. Residues 32–46 show a composition bias toward low complexity; sequence LSKSSRLSKSSRPSS. Phosphoserine occurs at positions 108 and 110. Residues 138-152 are compositionally biased toward acidic residues; sequence LSDDDSEIEYSDEVQ. Phosphoserine occurs at positions 214 and 215. A Phosphothreonine modification is found at Thr216. Over residues 237–253 the composition is skewed to polar residues; it reads KSLSPRSSAGASVVKTS. Positions 452 to 652 constitute a Helicase ATP-binding domain; it reads WRERKLPRGG…YALLKFLRCS (201 aa). 465–472 contacts ATP; the sequence is DDMGLGKT. The interval 485–523 is disordered; sequence GQEMSEGKDESSDSDSEDDKNKKRKSVTGWKSKGRKDTR. Positions 506-522 are enriched in basic residues; it reads KKRKSVTGWKSKGRKDT. Positions 603 to 606 match the DEAH box motif; it reads DEAH. The Helicase C-terminal domain occupies 891–1056; the sequence is KINMVIQILK…SSKLTIDDLK (166 aa).

The protein belongs to the SNF2/RAD54 helicase family.

The protein resides in the nucleus. In terms of biological role, dsDNA-dependent ATPase which acts as a transcription termination factor by coupling ATP hydrolysis with removal of RNA polymerase II from the DNA template. This is Transcription termination factor 2 (lds) from Drosophila melanogaster (Fruit fly).